The primary structure comprises 406 residues: MSQPITRENFDEWMIPVYAPAPFIPVRGEGSRLWDQQGKEYIDFSGGIAVNALGHAHPELREALNEQASKFWHTGNGYTNEPVLRLAKKLIDATFADRVFFCNSGAEANEAALKLARKFAHDRYGSHKSGIVAFKNAFHGRTLFTVSAGGQPAYSQDFAPLPPDIRHAAYNDINSASALIDDATCAVIVEPIQGEGGVVPASNAFLQGLRELCDRHNALLIFDEVQTGVGRTGELYAYMHYGVTPDLLTTAKALGGGFPVGALLATKECASVMTVGTHGTTYGGNPLASAVAGKVLDLINTPEMLNGVKQRHDWFVERLNSINHHYSLFSEVRGLGLLIGCVLNADYAGQAKQISQEAVKAGVMVLIAGGNVVRFAPALNVSEEEVTTGLDRFSAACEHFVSRGSS.

At Lys252 the chain carries N6-(pyridoxal phosphate)lysine.

The protein belongs to the class-III pyridoxal-phosphate-dependent aminotransferase family. AstC subfamily. It depends on pyridoxal 5'-phosphate as a cofactor.

The catalysed reaction is N(2)-succinyl-L-ornithine + 2-oxoglutarate = N-succinyl-L-glutamate 5-semialdehyde + L-glutamate. Its pathway is amino-acid degradation; L-arginine degradation via AST pathway; L-glutamate and succinate from L-arginine: step 3/5. Its function is as follows. Catalyzes the transamination of N(2)-succinylornithine and alpha-ketoglutarate into N(2)-succinylglutamate semialdehyde and glutamate. Can also act as an acetylornithine aminotransferase. The polypeptide is Succinylornithine transaminase (Escherichia coli O127:H6 (strain E2348/69 / EPEC)).